The following is a 98-amino-acid chain: uncharacterized protein (98 aa).

The interval 77 to 98 (SERAGEEVPPLAVAGSDDGHDH) is disordered.

This sequence to M.tuberculosis Rv1991c and Rv3269.

This is an uncharacterized protein from Mycobacterium bovis (strain ATCC BAA-935 / AF2122/97).